The chain runs to 296 residues: Transposase for insertion sequence element IST2 (296 aa).

It belongs to the transposase mutator family.

In terms of biological role, required for the transposition of the insertion element. The sequence is that of Transposase for insertion sequence element IST2 from Acidithiobacillus ferrooxidans (Thiobacillus ferrooxidans).